The chain runs to 124 residues: Small ribosomal subunit protein uS12 (124 aa).

The disordered stretch occupies residues 1–22 (MATINQLVRKPRSRKVAKSDVP). Residue Asp-89 is modified to 3-methylthioaspartic acid. Residues 104 to 124 (TAGVNDRRQGRSKYGAKRGKS) are disordered. Positions 113 to 124 (GRSKYGAKRGKS) are enriched in basic residues.

This sequence belongs to the universal ribosomal protein uS12 family. In terms of assembly, part of the 30S ribosomal subunit. Contacts proteins S8 and S17. May interact with IF1 in the 30S initiation complex.

Functionally, with S4 and S5 plays an important role in translational accuracy. In terms of biological role, interacts with and stabilizes bases of the 16S rRNA that are involved in tRNA selection in the A site and with the mRNA backbone. Located at the interface of the 30S and 50S subunits, it traverses the body of the 30S subunit contacting proteins on the other side and probably holding the rRNA structure together. The combined cluster of proteins S8, S12 and S17 appears to hold together the shoulder and platform of the 30S subunit. The sequence is that of Small ribosomal subunit protein uS12 from Hahella chejuensis (strain KCTC 2396).